The following is a 232-amino-acid chain: Flagellar L-ring protein (232 aa).

The first 15 residues, M1–G15, serve as a signal peptide directing secretion. The N-palmitoyl cysteine moiety is linked to residue C16. C16 is lipidated: S-diacylglycerol cysteine.

The protein belongs to the FlgH family. As to quaternary structure, the basal body constitutes a major portion of the flagellar organelle and consists of four rings (L,P,S, and M) mounted on a central rod.

The protein localises to the cell outer membrane. Its subcellular location is the bacterial flagellum basal body. Assembles around the rod to form the L-ring and probably protects the motor/basal body from shearing forces during rotation. This is Flagellar L-ring protein from Campylobacter jejuni subsp. jejuni serotype O:23/36 (strain 81-176).